A 303-amino-acid polypeptide reads, in one-letter code: Protease HtpX homolog (303 aa).

The next 2 helical transmembrane spans lie at 19 to 39 and 41 to 61; these read IIIF…VSYF and LGEF…YYAY. H146 is a Zn(2+) binding site. Residue E147 is part of the active site. Position 150 (H150) interacts with Zn(2+). 2 helical membrane-spanning segments follow: residues 156 to 176 and 192 to 212; these read VRLQ…GDSL and NILG…ATLL. E221 contacts Zn(2+).

Belongs to the peptidase M48B family. Requires Zn(2+) as cofactor.

It is found in the cell inner membrane. The protein is Protease HtpX homolog of Dictyoglomus thermophilum (strain ATCC 35947 / DSM 3960 / H-6-12).